The following is a 78-amino-acid chain: MPIKKGSLVRAVRDKLDNSLEALANDTRWPSYLFETDGEVLDMRGDYALIKFGAVPTPPVWLRQDQLAESGAAAESTS.

It belongs to the complex I NdhO subunit family. NDH-1 can be composed of about 15 different subunits; different subcomplexes with different compositions have been identified which probably have different functions.

The protein resides in the cell inner membrane. The enzyme catalyses a plastoquinone + NADH + (n+1) H(+)(in) = a plastoquinol + NAD(+) + n H(+)(out). It catalyses the reaction a plastoquinone + NADPH + (n+1) H(+)(in) = a plastoquinol + NADP(+) + n H(+)(out). NDH-1 shuttles electrons from an unknown electron donor, via FMN and iron-sulfur (Fe-S) centers, to quinones in the respiratory and/or the photosynthetic chain. The immediate electron acceptor for the enzyme in this species is believed to be plastoquinone. Couples the redox reaction to proton translocation, and thus conserves the redox energy in a proton gradient. Cyanobacterial NDH-1 also plays a role in inorganic carbon-concentration. This chain is NAD(P)H-quinone oxidoreductase subunit O, found in Gloeobacter violaceus (strain ATCC 29082 / PCC 7421).